The sequence spans 82 residues: Consomatin Mao1 (82 aa).

The signal sequence occupies residues 1 to 22; that stretch reads MQTASWVMVMMMVWITAPLSEG. Positions 23 to 57 are excised as a propeptide; the sequence is GKLNDVIRGLVPDDVTPQLILRSLFFHRPSDSVVR. An intrachain disulfide couples cysteine 65 to cysteine 70. A D-tryptophan modification is found at tryptophan 67. 4-hydroxyproline occurs at positions 71, 72, and 74. Positions 75–82 are excised as a propeptide; the sequence is WRRPNGKG.

This sequence belongs to the conotoxin C superfamily. Consomatin family. Expressed by the venom duct.

It localises to the secreted. Functionally, moderately activates human somatostatin receptors (SSTR) with a preferential activation of SSTR1 and SSTR4. In vivo, does not cause behavioral changes in mice within a few minutes of intracranial injection, but causes a progressive loss of movement thereafter. Four to five hours after injection, mice recover, even with the highest dose tested. Shows antinociception and antihyperalgesia activities in two mouse models of acute pain, most probably by acting outside the central nervous system. The sequence is that of Consomatin Mao1 from Conus maioensis (Sea snail).